Consider the following 350-residue polypeptide: Probable peptidyl-alpha-hydroxyglycine alpha-amidating lyase pgal-1 (350 aa).

A signal peptide spans Met-1–Ala-19. One copy of the NHL 1 repeat lies at Asp-46–Asp-90. An N-linked (GlcNAc...) asparagine glycan is attached at Asn-103. NHL repeat units follow at residues Lys-113 to Lys-154, Leu-162 to Lys-206, and Gln-212 to Gly-256. 2 cysteine pairs are disulfide-bonded: Cys-176/Cys-196 and Cys-241/Cys-252.

Belongs to the peptidyl-alpha-hydroxyglycine alpha-amidating lyase family. Requires Zn(2+) as cofactor.

Its subcellular location is the secreted. The enzyme catalyses a [peptide]-C-terminal (2S)-2-hydroxyglycine = a [peptide]-C-terminal amide + glyoxylate. Functionally, probable lyase that catalyzes an essential reaction in C-terminal alpha-amidation of peptides. Mediates the dismutation of the unstable peptidyl(2-hydroxyglycine) intermediate to glyoxylate and the corresponding desglycine peptide amide. C-terminal amidation of peptides such as neuropeptides is essential for full biological activity. In Caenorhabditis elegans, this protein is Probable peptidyl-alpha-hydroxyglycine alpha-amidating lyase pgal-1.